We begin with the raw amino-acid sequence, 558 residues long: Dihydroxy-acid dehydratase (558 aa).

Asp78 provides a ligand contact to Mg(2+). Residue Cys119 participates in [2Fe-2S] cluster binding. Asp120 and Lys121 together coordinate Mg(2+). Lys121 is subject to N6-carboxylysine. Cys192 lines the [2Fe-2S] cluster pocket. Residue Glu446 coordinates Mg(2+). Ser472 (proton acceptor) is an active-site residue.

The protein belongs to the IlvD/Edd family. In terms of assembly, homodimer. [2Fe-2S] cluster is required as a cofactor. Mg(2+) serves as cofactor.

The enzyme catalyses (2R)-2,3-dihydroxy-3-methylbutanoate = 3-methyl-2-oxobutanoate + H2O. It carries out the reaction (2R,3R)-2,3-dihydroxy-3-methylpentanoate = (S)-3-methyl-2-oxopentanoate + H2O. The protein operates within amino-acid biosynthesis; L-isoleucine biosynthesis; L-isoleucine from 2-oxobutanoate: step 3/4. Its pathway is amino-acid biosynthesis; L-valine biosynthesis; L-valine from pyruvate: step 3/4. In terms of biological role, functions in the biosynthesis of branched-chain amino acids. Catalyzes the dehydration of (2R,3R)-2,3-dihydroxy-3-methylpentanoate (2,3-dihydroxy-3-methylvalerate) into 2-oxo-3-methylpentanoate (2-oxo-3-methylvalerate) and of (2R)-2,3-dihydroxy-3-methylbutanoate (2,3-dihydroxyisovalerate) into 2-oxo-3-methylbutanoate (2-oxoisovalerate), the penultimate precursor to L-isoleucine and L-valine, respectively. This chain is Dihydroxy-acid dehydratase, found in Campylobacter lari (strain RM2100 / D67 / ATCC BAA-1060).